A 229-amino-acid polypeptide reads, in one-letter code: Nisin biosynthesis regulatory protein NisR (229 aa).

The 114-residue stretch at 4 to 117 (KILIVDDDQE…QLVAKVEANI (114 aa)) folds into the Response regulatory domain. Position 53 is a 4-aspartylphosphate (D53). A DNA-binding region (ompR/PhoB-type) is located at residues 132–229 (EIRRDLGPIT…VRGLGYQWHG (98 aa)).

In terms of processing, phosphorylated by NisK.

Member of the two-component regulatory system NisK/NisR involved in the regulation of the biosynthesis of lantibiotic nisin. NisR may function as a regulatory protein. The protein is Nisin biosynthesis regulatory protein NisR (nisR) of Lactococcus lactis subsp. lactis (Streptococcus lactis).